Here is a 109-residue protein sequence, read N- to C-terminus: Nucleoid-associated protein APL_0075 (109 aa).

Residues 1 to 21 (MFGKGGLGGLMKQAQQMQERM) form a disordered region. The span at 10–19 (LMKQAQQMQE) shows a compositional bias: low complexity.

Belongs to the YbaB/EbfC family. As to quaternary structure, homodimer.

The protein resides in the cytoplasm. Its subcellular location is the nucleoid. Functionally, binds to DNA and alters its conformation. May be involved in regulation of gene expression, nucleoid organization and DNA protection. This is Nucleoid-associated protein APL_0075 from Actinobacillus pleuropneumoniae serotype 5b (strain L20).